A 747-amino-acid polypeptide reads, in one-letter code: MVAFMNSATFVAGLFTLWSRPIWATPASNTNAVVVNGTAFTLNGDHVSYRFHVDDATGDLFSDHFGPRVSGNFPTEIVSQVNGWVNTIGRVRREFPDQGRGDFRIPAIRIRQTAGYTVSELLYRSHTVIPGKPALPGLPATFGSEEDVTTLVVHLYDEISEVAADLSYSIFPKYDAVVRSVNVTNQGAGNITIETLASLSVDFPYEDLDMVYLRGDWAREAHSERRKVEYGTQGFDSSAGYSSHLHNPFLAIMNPATTESQGETWGFSLVYSGSFAVNVERGSQGFTRALLGLNPGQLSWVLRPGESLVSPECVAVYSADGIGGMSRLLHRLYRNHLIKSKFAVSDRPVLLNSWEGLGFNYNETTVYQLATEAAELGVKLFVLDDGWFGDKYPRTADNAGLGDWVPNPDRFPHGLPHEVDRITALHPGNDTSTNLRFGLWFEPEMVNPNSSLYHQHPDWALHAGSYPRTLTRNQLVLNMALPEVQDYVIKSVSDILDSADISYVKWDNNRGIHETPSPSTDHQYMLGMYRVFDNLTTKYPNVLWEGCASGGGRFDPGVLQYFPQIWTSDDTDALERITIQMGTSLAYPPSAMGAHLSAVPNQQTGRTLPITFRAHVAMMGGSFGLELNPAHMPDDERDAVPGLIALAERVNPIVLTGDMYRLSPHDSQWPAVLFISPDGEQAVLFYFQTSPRVDNSIPRVKMQGLDPQAVYSVDGDAEYSGATLMNVGLQFPFDSDVGSKVVFFQRL.

The signal sequence occupies residues 1–24 (MVAFMNSATFVAGLFTLWSRPIWA). N-linked (GlcNAc...) asparagine glycosylation is found at Asn-36, Asn-182, Asn-190, Asn-362, Asn-429, and Asn-449. The Nucleophile role is filled by Asp-507. Asn-534 carries N-linked (GlcNAc...) asparagine glycosylation. Asp-569 (proton donor) is an active-site residue.

Belongs to the glycosyl hydrolase 36 family. In terms of assembly, homotetramer. Mg(2+) is required as a cofactor. Requires NAD(+) as cofactor.

The protein localises to the secreted. The catalysed reaction is Hydrolysis of terminal, non-reducing alpha-D-galactose residues in alpha-D-galactosides, including galactose oligosaccharides, galactomannans and galactolipids.. Its function is as follows. Hydrolyzes a variety of simple alpha-D-galactoside as well as more complex molecules such as oligosaccharides and polysaccharides. The polypeptide is Probable alpha-galactosidase C (aglC) (Aspergillus terreus (strain NIH 2624 / FGSC A1156)).